The sequence spans 415 residues: F-box protein At3g13820 (415 aa).

Residues 1-50 form the F-box domain; that stretch reads MTTMSNLPAEVLEEILSRTPVTSLRTMRSTCKKWNNLSKKKIIPEAARKQ. Disordered stretches follow at residues 209–229 and 387–415; these read NDYD…EDDD and KQPK…KIIG. Residues 210 to 229 show a composition bias toward acidic residues; the sequence is DYDDQEDEEEEDDEEYEDDD. A compositionally biased stretch (basic residues) spans 403–415; that stretch reads NKNKKGRKIKIIG.

This is F-box protein At3g13820 from Arabidopsis thaliana (Mouse-ear cress).